The chain runs to 357 residues: UDP-N-acetylglucosamine--N-acetylmuramyl-(pentapeptide) pyrophosphoryl-undecaprenol N-acetylglucosamine transferase (357 aa).

Residues 14–16, Asn120, Arg164, Ser194, and Gln291 each bind UDP-N-acetyl-alpha-D-glucosamine; that span reads TGG.

The protein belongs to the glycosyltransferase 28 family. MurG subfamily.

Its subcellular location is the cell inner membrane. The enzyme catalyses di-trans,octa-cis-undecaprenyl diphospho-N-acetyl-alpha-D-muramoyl-L-alanyl-D-glutamyl-meso-2,6-diaminopimeloyl-D-alanyl-D-alanine + UDP-N-acetyl-alpha-D-glucosamine = di-trans,octa-cis-undecaprenyl diphospho-[N-acetyl-alpha-D-glucosaminyl-(1-&gt;4)]-N-acetyl-alpha-D-muramoyl-L-alanyl-D-glutamyl-meso-2,6-diaminopimeloyl-D-alanyl-D-alanine + UDP + H(+). It participates in cell wall biogenesis; peptidoglycan biosynthesis. Its function is as follows. Cell wall formation. Catalyzes the transfer of a GlcNAc subunit on undecaprenyl-pyrophosphoryl-MurNAc-pentapeptide (lipid intermediate I) to form undecaprenyl-pyrophosphoryl-MurNAc-(pentapeptide)GlcNAc (lipid intermediate II). In Fusobacterium nucleatum subsp. nucleatum (strain ATCC 25586 / DSM 15643 / BCRC 10681 / CIP 101130 / JCM 8532 / KCTC 2640 / LMG 13131 / VPI 4355), this protein is UDP-N-acetylglucosamine--N-acetylmuramyl-(pentapeptide) pyrophosphoryl-undecaprenol N-acetylglucosamine transferase.